The primary structure comprises 106 residues: Pyrimidine/purine nucleoside phosphorylase (106 aa).

Belongs to the nucleoside phosphorylase PpnP family.

It catalyses the reaction a purine D-ribonucleoside + phosphate = a purine nucleobase + alpha-D-ribose 1-phosphate. The catalysed reaction is adenosine + phosphate = alpha-D-ribose 1-phosphate + adenine. The enzyme catalyses cytidine + phosphate = cytosine + alpha-D-ribose 1-phosphate. It carries out the reaction guanosine + phosphate = alpha-D-ribose 1-phosphate + guanine. It catalyses the reaction inosine + phosphate = alpha-D-ribose 1-phosphate + hypoxanthine. The catalysed reaction is thymidine + phosphate = 2-deoxy-alpha-D-ribose 1-phosphate + thymine. The enzyme catalyses uridine + phosphate = alpha-D-ribose 1-phosphate + uracil. It carries out the reaction xanthosine + phosphate = alpha-D-ribose 1-phosphate + xanthine. In terms of biological role, catalyzes the phosphorolysis of diverse nucleosides, yielding D-ribose 1-phosphate and the respective free bases. Can use uridine, adenosine, guanosine, cytidine, thymidine, inosine and xanthosine as substrates. Also catalyzes the reverse reactions. The chain is Pyrimidine/purine nucleoside phosphorylase from Burkholderia multivorans (strain ATCC 17616 / 249).